A 334-amino-acid chain; its full sequence is Cytoskeleton protein RodZ (334 aa).

Residues 1 to 111 (MNTEATHDQN…LGKRRKKRDG (111 aa)) lie on the Cytoplasmic side of the membrane. The region spanning 19 to 71 (LRNAREQLGLSQQAVAERLCLKVSTVRDIEEDKAPSDLASTFLRGYIRSYARL) is the HTH cro/C1-type domain. Residues 30 to 49 (QQAVAERLCLKVSTVRDIEE) constitute a DNA-binding region (H-T-H motif). Residues 112–132 (WLMSFTWLVLFVVVGLTGAWW) form a helical; Signal-anchor for type II membrane protein membrane-spanning segment. The Periplasmic segment spans residues 133–334 (WQNHKAQQEE…TLNAEPTPAQ (202 aa)). The disordered stretch occupies residues 155–241 (NADKDSGQSV…PSALPTSQAG (87 aa)). The span at 161 to 175 (GQSVPLDTGAVTSQD) shows a compositional bias: polar residues. Composition is skewed to low complexity over residues 176–211 (TTPA…TVVA) and 219–241 (TAAT…SQAG).

This sequence belongs to the RodZ family.

It is found in the cell inner membrane. Functionally, cytoskeletal protein that is involved in cell-shape control through regulation of the length of the long axis. This is Cytoskeleton protein RodZ from Salmonella dublin (strain CT_02021853).